The primary structure comprises 859 residues: Envelope glycoprotein (859 aa).

The propeptide occupies 1–6; it reads MVSIAF. Topologically, residues 7-614 are extracellular; it reads YGGIPGGIST…KDLWSHIGNW (608 aa). Asn-40 carries an N-linked (GlcNAc...) asparagine; by host glycan. The tract at residues 47–66 is disordered; the sequence is AESKEARDQEMNLKEESKEE. Basic and acidic residues predominate over residues 48–66; the sequence is ESKEARDQEMNLKEESKEE. N-linked (GlcNAc...) asparagine; by host glycans are attached at residues Asn-112, Asn-141, Asn-148, Asn-186, Asn-214, Asn-233, Asn-244, Asn-340, Asn-368, Asn-399, Asn-406, and Asn-411. The interval 446–466 is fusion peptide; sequence FGISAIVAAIVAATAIAASAT. 2 N-linked (GlcNAc...) asparagine; by host glycosylation sites follow: Asn-483 and Asn-490. The segment at 498 to 513 is immunosuppression; it reads LIERQIKILYAMILQT. Asn-550 and Asn-557 each carry an N-linked (GlcNAc...) asparagine; by host glycan. Coiled coils occupy residues 576-624 and 663-699; these read ILTT…SIIK and KKFH…YYKQ. Residues 615–635 traverse the membrane as a helical segment; sequence IPGLGASIIKYIVMFLLIYLL. At 636–859 the chain is on the cytoplasmic side; that stretch reads LTSSPKILRA…TSHVSMPQYV (224 aa).

The mature envelope protein (Env) consists of a trimer of SU-TM heterodimers attached by noncovalent interactions or by a labile interchain disulfide bond. In terms of processing, specific enzymatic cleavages in vivo yield mature proteins. Envelope glycoproteins are synthesized as an inactive precursor that is N-glycosylated and processed likely by host cell furin or by a furin-like protease in the Golgi to yield the mature SU and TM proteins. The cleavage site between SU and TM requires the minimal sequence [KR]-X-[KR]-R.

The protein localises to the virion membrane. It is found in the host cell membrane. Functionally, the surface protein (SU) attaches the virus to the host cell by binding to its receptor. This interaction triggers the refolding of the transmembrane protein (TM) and is thought to activate its fusogenic potential by unmasking its fusion peptide. Fusion occurs at the host cell plasma membrane. The transmembrane protein (TM) acts as a class I viral fusion protein. Under the current model, the protein has at least 3 conformational states: pre-fusion native state, pre-hairpin intermediate state, and post-fusion hairpin state. During viral and target cell membrane fusion, the coiled coil regions (heptad repeats) assume a trimer-of-hairpins structure, positioning the fusion peptide in close proximity to the C-terminal region of the ectodomain. The formation of this structure appears to drive apposition and subsequent fusion of viral and target cell membranes. Membranes fusion leads to delivery of the nucleocapsid into the cytoplasm. In Equus asinus (Donkey), this protein is Envelope glycoprotein (env).